The primary structure comprises 365 residues: MSRPVPKPGILDIAPYTPGKSPVPEAGRKVFKLSANETPFGPSPHAIAAYKSAADHLEDYPEGTSRVLREAIGRAYGLDPDRIICGAGSDEILNLLAHTYLGPGDEAISSQHGFLVYPIATLANGATNVVAPEKDLTTDVDAILSKVTPNTKLVWLANPNNPTGTYIPFDEVKRLRAGLPSHVVLVLDAAYADYVSKNDYEIGIELVSTTDNTVLTHTFSKVHGLASLRIGWMFGPANIVDAVNRIRGPFNTSIPAQLAAVAAIQDTAHVDMSRVHTEKWRDRLTEEFTKLGLTVTPSVCNFVLMHFPTTAGKTAADADAFLTKRGLVLRALGNYKLPHALRMTIGTDEANELVIAALTEFMAKP.

Lys-221 is subject to N6-(pyridoxal phosphate)lysine.

This sequence belongs to the class-II pyridoxal-phosphate-dependent aminotransferase family. Histidinol-phosphate aminotransferase subfamily. As to quaternary structure, homodimer. The cofactor is pyridoxal 5'-phosphate.

The catalysed reaction is L-histidinol phosphate + 2-oxoglutarate = 3-(imidazol-4-yl)-2-oxopropyl phosphate + L-glutamate. It functions in the pathway amino-acid biosynthesis; L-histidine biosynthesis; L-histidine from 5-phospho-alpha-D-ribose 1-diphosphate: step 7/9. This Rhodopseudomonas palustris (strain HaA2) protein is Histidinol-phosphate aminotransferase.